The chain runs to 409 residues: Peptidase T (409 aa).

Residue H78 participates in Zn(2+) binding. Residue D80 is part of the active site. D140 provides a ligand contact to Zn(2+). E173 (proton acceptor) is an active-site residue. Zn(2+) is bound by residues E174, D196, and H379.

Belongs to the peptidase M20B family. The cofactor is Zn(2+).

It is found in the cytoplasm. It carries out the reaction Release of the N-terminal residue from a tripeptide.. Cleaves the N-terminal amino acid of tripeptides. This Serratia proteamaculans (strain 568) protein is Peptidase T.